Here is a 233-residue protein sequence, read N- to C-terminus: Phosphatidylserine decarboxylase proenzyme (233 aa).

Residue Ser-190 is the Schiff-base intermediate with substrate; via pyruvic acid of the active site. Residue Ser-190 is modified to Pyruvic acid (Ser); by autocatalysis.

The protein belongs to the phosphatidylserine decarboxylase family. PSD-A subfamily. In terms of assembly, heterodimer of a large membrane-associated beta subunit and a small pyruvoyl-containing alpha subunit. It depends on pyruvate as a cofactor. Is synthesized initially as an inactive proenzyme. Formation of the active enzyme involves a self-maturation process in which the active site pyruvoyl group is generated from an internal serine residue via an autocatalytic post-translational modification. Two non-identical subunits are generated from the proenzyme in this reaction, and the pyruvate is formed at the N-terminus of the alpha chain, which is derived from the carboxyl end of the proenzyme. The post-translation cleavage follows an unusual pathway, termed non-hydrolytic serinolysis, in which the side chain hydroxyl group of the serine supplies its oxygen atom to form the C-terminus of the beta chain, while the remainder of the serine residue undergoes an oxidative deamination to produce ammonia and the pyruvoyl prosthetic group on the alpha chain.

It is found in the cell membrane. The catalysed reaction is a 1,2-diacyl-sn-glycero-3-phospho-L-serine + H(+) = a 1,2-diacyl-sn-glycero-3-phosphoethanolamine + CO2. It functions in the pathway phospholipid metabolism; phosphatidylethanolamine biosynthesis; phosphatidylethanolamine from CDP-diacylglycerol: step 2/2. Catalyzes the formation of phosphatidylethanolamine (PtdEtn) from phosphatidylserine (PtdSer). In Azorhizobium caulinodans (strain ATCC 43989 / DSM 5975 / JCM 20966 / LMG 6465 / NBRC 14845 / NCIMB 13405 / ORS 571), this protein is Phosphatidylserine decarboxylase proenzyme.